A 274-amino-acid polypeptide reads, in one-letter code: 16S rRNA (guanine(1405)-N(7))-methyltransferase (274 aa).

Residues phenylalanine 64, 102–104 (HVS), arginine 108, alanine 133, aspartate 156, 182–183 (DL), leucine 198, and glutamine 207 contribute to the S-adenosyl-L-methionine site.

It belongs to the methyltransferase superfamily. Aminoglycoside resistance family.

The catalysed reaction is guanosine(1405) in 16S rRNA + S-adenosyl-L-methionine = N(7)-methylguanosine(1405) in 16S rRNA + S-adenosyl-L-homocysteine. Its function is as follows. Specifically methylates the N(7) position of guanine 1405 in 16S rRNA. Confers resistance to various aminoglycosides, including gentamicin and kanamycin. The polypeptide is 16S rRNA (guanine(1405)-N(7))-methyltransferase (grm) (Micromonospora echinospora (Micromonospora purpurea)).